The following is a 325-amino-acid chain: MRKPKITVIGGGTGSPVILKSLREKDVEIAAIVTVADDGGSSGELRKNMQQLTPPGDLRNVLVAMSDMPKFYEKVFQYRFSEDAGAFAGHPLGNLIIAGLSEMQGSTYNAMQLLSKFFHTTGKIYPSSDHPLTLHAVFQDGTEVAGESHIVDHRGIIDNVYVTNALNDDTPLASRRVVQTILESDMIVLGPGSLFTSILPNIVIKEIGRALLETKAEIAYVCNIMTQRGETEHFTDSDHVEVLHRHLGRPFIDTVLVNIEKVPQEYMNSNRFDEYLVQVEHDFVGLCKQVSRVISSNFLRLENGGAFHDGDLIVDELMRIIQVKK.

The protein belongs to the gluconeogenesis factor family.

The protein localises to the cytoplasm. In terms of biological role, required for morphogenesis under gluconeogenic growth conditions. This is Putative gluconeogenesis factor from Streptococcus pneumoniae serotype 4 (strain ATCC BAA-334 / TIGR4).